We begin with the raw amino-acid sequence, 1823 residues long: AF4/FMR2 family member lilli (1823 aa).

The segment covering 1 to 41 has biased composition (low complexity); it reads MAQQQQQQHQQQQHHQQQQQQLQQQQQLLQYNNNSYNLNYN. 12 disordered regions span residues 1 to 87, 126 to 305, 422 to 544, 570 to 626, 686 to 712, 753 to 1057, 1071 to 1287, 1322 to 1350, 1413 to 1448, 1480 to 1531, 1547 to 1567, and 1715 to 1744; these read MAQQ…DPEI, GFGS…ENHI, QQLT…KKKY, AGPG…WHLS, DSRHMDDDEDEQADQQHQQQQQRYGVG, PKNQ…DIPT, AAAQ…LKPR, ARQHHHQPERLKTQQNGHLSSRSAEGART, FMLKQELPARRRKRSSSSSSSPYKEKKRKKEKAEQL, ENSA…AIAS, TCSEAVQTTPPPAAPPPAPRL, and GNTPSSISPSNSVGSQGSGSNTPPGKIVPQ. Basic and acidic residues predominate over residues 53 to 79; it reads REKYERQQGIQSDDRETSLFGEPRRLN. Composition is skewed to low complexity over residues 126 to 147, 156 to 174, and 205 to 249; these read GFGSATTSFSSSSSASASSSAS, QQQQQQQQQQQQQHYQQQQ, and PSSS…TSSP. Residues 426 to 438 are compositionally biased toward pro residues; it reads PTPPKASPTPPVI. The residue at position 434 (Thr-434) is a Phosphothreonine. Residues 441-454 are compositionally biased toward basic and acidic residues; it reads LKTEKNHSLEKQDS. Residues 456 to 466 are compositionally biased toward acidic residues; that stretch reads LENDLELSESD. Residues Ser-463 and Ser-465 each carry the phosphoserine modification. The span at 475-531 shows a compositional bias: low complexity; the sequence is SAGNSSNSSESDSSESGSEASSKGDPQQQQQQQQQHLLHQQQQHQQQQLLLQQQQQQ. The span at 582-598 shows a compositional bias: gly residues; the sequence is AAGGVGSGSGSTGGGSS. The span at 599-612 shows a compositional bias: low complexity; it reads SSGMGTMSSSNSSN. The span at 764–785 shows a compositional bias: low complexity; that stretch reads SDSGSGSSGSGSSSSDSAGGSS. A compositionally biased stretch (polar residues) spans 818–827; that stretch reads HKAQPNSVTL. Over residues 839-849 the composition is skewed to basic residues; sequence PRQKKPRKKKM. Phosphoserine is present on residues Ser-859 and Ser-860. 5 stretches are compositionally biased toward low complexity: residues 877-906, 917-947, 962-979, 1002-1057, and 1102-1161; these read AATAAAAAANAAAASVMPVAAAAAAAAAPA, QAQQQQQQLQLQQQQQQSGNLSSASASSSQA, GTASSSSSSGTAATVAAG, AAMA…DIPT, and NSSN…QLLQ. A DNA-binding region (a.T hook) is located at residues 908-920; that stretch reads KKGRGRPRKQAQQ. 2 positions are modified to phosphoserine: Ser-939 and Ser-941. Residues 1172 to 1181 show a composition bias toward polar residues; it reads TLKQSAQQRL. 2 stretches are compositionally biased toward low complexity: residues 1182-1203 and 1253-1280; these read SSSDCSSSASSDSSSNSSASSS and QQQQQQQQQQQQQQQQQQQQQQQQQQQQ. Residues 1334–1344 are compositionally biased toward polar residues; it reads TQQNGHLSSRS. Residues 1480–1496 show a composition bias toward polar residues; that stretch reads ENSANASPNKLQQQNAR. Phosphoserine is present on Ser-1486. Positions 1497-1531 are enriched in low complexity; the sequence is QLPLSQSQLQHQHQHQHQLQQQQSQSTATGHAIAS. The segment covering 1555 to 1565 has biased composition (pro residues); sequence TPPPAAPPPAP. Positions 1715–1735 are enriched in low complexity; the sequence is GNTPSSISPSNSVGSQGSGSN.

This sequence belongs to the AF4 family.

Its subcellular location is the nucleus. Its function is as follows. Has a role in transcriptional regulation. Acts in parallel with the Ras/MAPK and the PI3K/PKB pathways in the control of cell identity and cellular growth. Essential for regulation of the cytoskeleton and cell growth but not for cell proliferation or growth rate. Required specifically for the microtubule-based basal transport of lipid droplets. Plays a partially redundant function downstream of Raf in cell fate specification in the developing eye. Pair-rule protein that regulates embryonic cellularization, gastrulation and segmentation. This chain is AF4/FMR2 family member lilli, found in Drosophila virilis (Fruit fly).